The primary structure comprises 145 residues: MFNLLKPKGASKRRKIVGRGPGSGLGKTSGRGQKGQKARNTSPRLGFEGGQTPLYRRLPRKGFSNNDYKLEYTIVNLGDIDKKFKDGQVVNYDTLLENKLIRKKNKKIKILSNGELTKKVSLEVSKISKSAESLVIRIGGTIKLV.

The disordered stretch occupies residues 1–58; it reads MFNLLKPKGASKRRKIVGRGPGSGLGKTSGRGQKGQKARNTSPRLGFEGGQTPLYRRL. Gly residues predominate over residues 19 to 33; that stretch reads RGPGSGLGKTSGRGQ.

The protein belongs to the universal ribosomal protein uL15 family. As to quaternary structure, part of the 50S ribosomal subunit.

Functionally, binds to the 23S rRNA. The sequence is that of Large ribosomal subunit protein uL15 from Borrelia garinii subsp. bavariensis (strain ATCC BAA-2496 / DSM 23469 / PBi) (Borreliella bavariensis).